The following is a 261-amino-acid chain: Cytochrome c oxidase subunit 3 (261 aa).

At 1–15 (MTHQTHAYHMVNPSP) the chain is on the mitochondrial matrix side. The chain crosses the membrane as a helical span at residues 16–34 (WPLTGALSALLMTSGLVMW). Topologically, residues 35-40 (FHYHST) are mitochondrial intermembrane. A helical transmembrane segment spans residues 41–66 (ILVLLGLLTNILTMYQWWRDVVREGT). Topologically, residues 67 to 72 (FQGHHT) are mitochondrial matrix. A helical transmembrane segment spans residues 73-105 (PTVQKGLRYGMVLFIISEVFFFAGFFWAFYHSS). Topologically, residues 106–128 (LAPTPELGGCWPPTGIHPLDPME) are mitochondrial intermembrane. Residues 129-152 (VPLLNTSVLLASGVTITWAHHSLM) form a helical membrane-spanning segment. The Mitochondrial matrix portion of the chain corresponds to 153–155 (EGN). The helical transmembrane segment at 156 to 183 (RKQMLQALFITISLGIYFTLLQASEYHE) threads the bilayer. The Mitochondrial intermembrane segment spans residues 184–190 (ASFSISD). Residues 191–223 (GIYGSTFFMATGFHGLHVIIGSTFLAVCFLRQL) form a helical membrane-spanning segment. The Mitochondrial matrix segment spans residues 224 to 232 (KFHFTSNHH). Residues 233–256 (FGFEAAAWYWHFVDVVWLFLYVSI) traverse the membrane as a helical segment. At 257-261 (YWWGS) the chain is on the mitochondrial intermembrane side.

The protein belongs to the cytochrome c oxidase subunit 3 family. Component of the cytochrome c oxidase (complex IV, CIV), a multisubunit enzyme composed of 14 subunits. The complex is composed of a catalytic core of 3 subunits MT-CO1, MT-CO2 and MT-CO3, encoded in the mitochondrial DNA, and 11 supernumerary subunits COX4I, COX5A, COX5B, COX6A, COX6B, COX6C, COX7A, COX7B, COX7C, COX8 and NDUFA4, which are encoded in the nuclear genome. The complex exists as a monomer or a dimer and forms supercomplexes (SCs) in the inner mitochondrial membrane with NADH-ubiquinone oxidoreductase (complex I, CI) and ubiquinol-cytochrome c oxidoreductase (cytochrome b-c1 complex, complex III, CIII), resulting in different assemblies (supercomplex SCI(1)III(2)IV(1) and megacomplex MCI(2)III(2)IV(2)).

It is found in the mitochondrion inner membrane. The enzyme catalyses 4 Fe(II)-[cytochrome c] + O2 + 8 H(+)(in) = 4 Fe(III)-[cytochrome c] + 2 H2O + 4 H(+)(out). Functionally, component of the cytochrome c oxidase, the last enzyme in the mitochondrial electron transport chain which drives oxidative phosphorylation. The respiratory chain contains 3 multisubunit complexes succinate dehydrogenase (complex II, CII), ubiquinol-cytochrome c oxidoreductase (cytochrome b-c1 complex, complex III, CIII) and cytochrome c oxidase (complex IV, CIV), that cooperate to transfer electrons derived from NADH and succinate to molecular oxygen, creating an electrochemical gradient over the inner membrane that drives transmembrane transport and the ATP synthase. Cytochrome c oxidase is the component of the respiratory chain that catalyzes the reduction of oxygen to water. Electrons originating from reduced cytochrome c in the intermembrane space (IMS) are transferred via the dinuclear copper A center (CU(A)) of subunit 2 and heme A of subunit 1 to the active site in subunit 1, a binuclear center (BNC) formed by heme A3 and copper B (CU(B)). The BNC reduces molecular oxygen to 2 water molecules using 4 electrons from cytochrome c in the IMS and 4 protons from the mitochondrial matrix. This chain is Cytochrome c oxidase subunit 3 (MT-CO3), found in Dugong dugon (Dugong).